An 801-amino-acid chain; its full sequence is Probable methionine--tRNA ligase (801 aa).

The 'HIGH' region motif lies at P25–N35. Residues K347–S351 carry the 'KMSKS' region motif. Residue K350 participates in ATP binding. Residues D606–N633 are disordered. In terms of domain architecture, tRNA-binding spans T639 to T742.

Belongs to the class-I aminoacyl-tRNA synthetase family.

The protein localises to the cytoplasm. It carries out the reaction tRNA(Met) + L-methionine + ATP = L-methionyl-tRNA(Met) + AMP + diphosphate. This is Probable methionine--tRNA ligase from Oryza sativa subsp. japonica (Rice).